Reading from the N-terminus, the 290-residue chain is Phosphoribosylaminoimidazole-succinocarboxamide synthase (290 aa).

It belongs to the SAICAR synthetase family.

The enzyme catalyses 5-amino-1-(5-phospho-D-ribosyl)imidazole-4-carboxylate + L-aspartate + ATP = (2S)-2-[5-amino-1-(5-phospho-beta-D-ribosyl)imidazole-4-carboxamido]succinate + ADP + phosphate + 2 H(+). The protein operates within purine metabolism; IMP biosynthesis via de novo pathway; 5-amino-1-(5-phospho-D-ribosyl)imidazole-4-carboxamide from 5-amino-1-(5-phospho-D-ribosyl)imidazole-4-carboxylate: step 1/2. The polypeptide is Phosphoribosylaminoimidazole-succinocarboxamide synthase (Haemophilus influenzae (strain PittEE)).